Here is a 319-residue protein sequence, read N- to C-terminus: tRNA dimethylallyltransferase (319 aa).

11–18 (GPTCSGKS) contacts ATP. Substrate is bound at residue 13 to 18 (TCSGKS). 2 interaction with substrate tRNA regions span residues 36 to 39 (DSMQ) and 160 to 164 (QRIAR).

Belongs to the IPP transferase family. Monomer. Mg(2+) serves as cofactor.

The enzyme catalyses adenosine(37) in tRNA + dimethylallyl diphosphate = N(6)-dimethylallyladenosine(37) in tRNA + diphosphate. Functionally, catalyzes the transfer of a dimethylallyl group onto the adenine at position 37 in tRNAs that read codons beginning with uridine, leading to the formation of N6-(dimethylallyl)adenosine (i(6)A). The chain is tRNA dimethylallyltransferase from Granulibacter bethesdensis (strain ATCC BAA-1260 / CGDNIH1).